Here is a 205-residue protein sequence, read N- to C-terminus: High frequency lysogenization protein HflD homolog (205 aa).

This sequence belongs to the HflD family.

The protein resides in the cytoplasm. It is found in the cell inner membrane. The sequence is that of High frequency lysogenization protein HflD homolog from Vibrio vulnificus (strain CMCP6).